The following is a 644-amino-acid chain: DNA mismatch repair protein MutL (644 aa).

Residues 336–356 (KRNINPLNRDDKTKDKSEYQK) form a disordered region. The segment covering 343–356 (NRDDKTKDKSEYQK) has biased composition (basic and acidic residues).

The protein belongs to the DNA mismatch repair MutL/HexB family.

This protein is involved in the repair of mismatches in DNA. It is required for dam-dependent methyl-directed DNA mismatch repair. May act as a 'molecular matchmaker', a protein that promotes the formation of a stable complex between two or more DNA-binding proteins in an ATP-dependent manner without itself being part of a final effector complex. The polypeptide is DNA mismatch repair protein MutL (Halothermothrix orenii (strain H 168 / OCM 544 / DSM 9562)).